Reading from the N-terminus, the 510-residue chain is Histidine ammonia-lyase (510 aa).

Positions 143–145 form a cross-link, 5-imidazolinone (Ala-Gly); that stretch reads ASG. Serine 144 is subject to 2,3-didehydroalanine (Ser).

The protein belongs to the PAL/histidase family. In terms of processing, contains an active site 4-methylidene-imidazol-5-one (MIO), which is formed autocatalytically by cyclization and dehydration of residues Ala-Ser-Gly.

It localises to the cytoplasm. It carries out the reaction L-histidine = trans-urocanate + NH4(+). It functions in the pathway amino-acid degradation; L-histidine degradation into L-glutamate; N-formimidoyl-L-glutamate from L-histidine: step 1/3. In Psychromonas ingrahamii (strain DSM 17664 / CCUG 51855 / 37), this protein is Histidine ammonia-lyase.